A 341-amino-acid polypeptide reads, in one-letter code: LIM and senescent cell antigen-like-containing domain protein 2 (341 aa).

LIM zinc-binding domains lie at 13–74 (AVCQ…LFAP), 76–133 (CGSC…EKAK), 138–195 (YICQ…KMGV), 196–255 (PICG…LFGD), and 256–315 (VCYN…FPLE). A Phosphoserine modification is found at F22. T327 bears the Phosphothreonine mark. Phosphoserine is present on S328.

As to quaternary structure, interacts with TGFB1I1. Interacts with integrin-linked protein kinase 1 (ILK) via the first LIM domain, and in competition with LIMS1. Part of the heterotrimeric IPP complex composed of integrin-linked kinase (ILK), LIMS1 or LIMS2, and PARVA.

The protein resides in the nucleus. It is found in the cell junction. It localises to the focal adhesion. The protein localises to the cell membrane. Functionally, adapter protein in a cytoplasmic complex linking beta-integrins to the actin cytoskeleton, bridges the complex to cell surface receptor tyrosine kinases and growth factor receptors. Plays a role in modulating cell spreading and migration. The protein is LIM and senescent cell antigen-like-containing domain protein 2 (LIMS2) of Homo sapiens (Human).